Here is a 351-residue protein sequence, read N- to C-terminus: Nicotinate-nucleotide--dimethylbenzimidazole phosphoribosyltransferase (351 aa).

Catalysis depends on E317, which acts as the Proton acceptor.

Belongs to the CobT family.

It catalyses the reaction 5,6-dimethylbenzimidazole + nicotinate beta-D-ribonucleotide = alpha-ribazole 5'-phosphate + nicotinate + H(+). The protein operates within nucleoside biosynthesis; alpha-ribazole biosynthesis; alpha-ribazole from 5,6-dimethylbenzimidazole: step 1/2. Its function is as follows. Catalyzes the synthesis of alpha-ribazole-5'-phosphate from nicotinate mononucleotide (NAMN) and 5,6-dimethylbenzimidazole (DMB). The chain is Nicotinate-nucleotide--dimethylbenzimidazole phosphoribosyltransferase from Pseudomonas putida (strain W619).